Consider the following 158-residue polypeptide: 6,7-dimethyl-8-ribityllumazine synthase (158 aa).

5-amino-6-(D-ribitylamino)uracil is bound by residues F22, 57–59 (AVE), and 81–83 (AVI). 86 to 87 (GT) serves as a coordination point for (2S)-2-hydroxy-3-oxobutyl phosphate. The Proton donor role is filled by H89. Residue F114 coordinates 5-amino-6-(D-ribitylamino)uracil. (2S)-2-hydroxy-3-oxobutyl phosphate is bound at residue R128.

It belongs to the DMRL synthase family. Forms an icosahedral capsid composed of 60 subunits, arranged as a dodecamer of pentamers.

It catalyses the reaction (2S)-2-hydroxy-3-oxobutyl phosphate + 5-amino-6-(D-ribitylamino)uracil = 6,7-dimethyl-8-(1-D-ribityl)lumazine + phosphate + 2 H2O + H(+). The protein operates within cofactor biosynthesis; riboflavin biosynthesis; riboflavin from 2-hydroxy-3-oxobutyl phosphate and 5-amino-6-(D-ribitylamino)uracil: step 1/2. In terms of biological role, catalyzes the formation of 6,7-dimethyl-8-ribityllumazine by condensation of 5-amino-6-(D-ribitylamino)uracil with 3,4-dihydroxy-2-butanone 4-phosphate. This is the penultimate step in the biosynthesis of riboflavin. The protein is 6,7-dimethyl-8-ribityllumazine synthase of Shewanella halifaxensis (strain HAW-EB4).